We begin with the raw amino-acid sequence, 310 residues long: Calcium homeostasis modulator protein 5 (310 aa).

Transmembrane regions (helical) follow at residues 17 to 37 (TIGY…FSMV), 49 to 69 (FPYG…VGFF), 101 to 121 (LIKV…VALL), and 181 to 201 (QILG…GTCY).

This sequence belongs to the CALHM family.

The protein localises to the membrane. Its function is as follows. Pore-forming subunit of a voltage-gated ion channel. The polypeptide is Calcium homeostasis modulator protein 5 (calhm5.1) (Danio rerio (Zebrafish)).